Reading from the N-terminus, the 125-residue chain is Large ribosomal subunit protein uL22c (125 aa).

Belongs to the universal ribosomal protein uL22 family. In terms of assembly, part of the 50S ribosomal subunit.

Its subcellular location is the plastid. It is found in the chloroplast. Functionally, this protein binds specifically to 23S rRNA. Its function is as follows. The globular domain of the protein is located near the polypeptide exit tunnel on the outside of the subunit, while an extended beta-hairpin is found that lines the wall of the exit tunnel in the center of the 70S ribosome. This is Large ribosomal subunit protein uL22c (rpl22) from Nuphar advena (Common spatterdock).